Reading from the N-terminus, the 129-residue chain is Glycine cleavage system H protein (129 aa).

Residues 23 to 105 enclose the Lipoyl-binding domain; that stretch reads SAVVGITEHA…YGEGWLAKFS (83 aa). Lysine 64 is modified (N6-lipoyllysine).

Belongs to the GcvH family. As to quaternary structure, the glycine cleavage system is composed of four proteins: P, T, L and H. The cofactor is (R)-lipoate.

The glycine cleavage system catalyzes the degradation of glycine. The H protein shuttles the methylamine group of glycine from the P protein to the T protein. This is Glycine cleavage system H protein from Herpetosiphon aurantiacus (strain ATCC 23779 / DSM 785 / 114-95).